The primary structure comprises 35 residues: Photosystem II reaction center protein M (35 aa).

Residues 5-25 (IFGLTATALFIIIPTSFLLIL) form a helical membrane-spanning segment.

Belongs to the PsbM family. As to quaternary structure, PSII is composed of 1 copy each of membrane proteins PsbA, PsbB, PsbC, PsbD, PsbE, PsbF, PsbH, PsbI, PsbJ, PsbK, PsbL, PsbM, PsbT, PsbX, PsbY, PsbZ, Psb30/Ycf12, at least 3 peripheral proteins of the oxygen-evolving complex and a large number of cofactors. It forms dimeric complexes.

It localises to the plastid. The protein resides in the chloroplast thylakoid membrane. Functionally, one of the components of the core complex of photosystem II (PSII). PSII is a light-driven water:plastoquinone oxidoreductase that uses light energy to abstract electrons from H(2)O, generating O(2) and a proton gradient subsequently used for ATP formation. It consists of a core antenna complex that captures photons, and an electron transfer chain that converts photonic excitation into a charge separation. This subunit is found at the monomer-monomer interface. The sequence is that of Photosystem II reaction center protein M from Tetradesmus obliquus (Green alga).